The primary structure comprises 152 residues: Xanthine-guanine phosphoribosyltransferase (152 aa).

Residues 37-38 (RG), R69, and 88-96 (DDLVDTGGT) each bind 5-phospho-alpha-D-ribose 1-diphosphate. R69 contacts GMP. D89 provides a ligand contact to Mg(2+). Residues D92 and I135 each coordinate guanine. 2 residues coordinate xanthine: D92 and I135. GMP-binding positions include 92 to 96 (DTGGT) and 134 to 135 (WI).

The protein belongs to the purine/pyrimidine phosphoribosyltransferase family. XGPT subfamily. In terms of assembly, homotetramer. Requires Mg(2+) as cofactor.

It is found in the cell inner membrane. It carries out the reaction GMP + diphosphate = guanine + 5-phospho-alpha-D-ribose 1-diphosphate. It catalyses the reaction XMP + diphosphate = xanthine + 5-phospho-alpha-D-ribose 1-diphosphate. The enzyme catalyses IMP + diphosphate = hypoxanthine + 5-phospho-alpha-D-ribose 1-diphosphate. It functions in the pathway purine metabolism; GMP biosynthesis via salvage pathway; GMP from guanine: step 1/1. It participates in purine metabolism; XMP biosynthesis via salvage pathway; XMP from xanthine: step 1/1. Its function is as follows. Purine salvage pathway enzyme that catalyzes the transfer of the ribosyl-5-phosphate group from 5-phospho-alpha-D-ribose 1-diphosphate (PRPP) to the N9 position of the 6-oxopurines guanine and xanthine to form the corresponding ribonucleotides GMP (guanosine 5'-monophosphate) and XMP (xanthosine 5'-monophosphate), with the release of PPi. To a lesser extent, also acts on hypoxanthine. The polypeptide is Xanthine-guanine phosphoribosyltransferase (Salmonella choleraesuis (strain SC-B67)).